Reading from the N-terminus, the 84-residue chain is uncharacterized protein (84 aa).

This is an uncharacterized protein from Saccharomyces cerevisiae (strain ATCC 204508 / S288c) (Baker's yeast).